The sequence spans 282 residues: NAD kinase (282 aa).

The active-site Proton acceptor is the Asp67. NAD(+) is bound by residues 67 to 68 (DG), 140 to 141 (NE), His151, Arg170, Asp172, and 183 to 188 (TAYNLS).

It belongs to the NAD kinase family. The cofactor is a divalent metal cation.

It localises to the cytoplasm. It catalyses the reaction NAD(+) + ATP = ADP + NADP(+) + H(+). In terms of biological role, involved in the regulation of the intracellular balance of NAD and NADP, and is a key enzyme in the biosynthesis of NADP. Catalyzes specifically the phosphorylation on 2'-hydroxyl of the adenosine moiety of NAD to yield NADP. The polypeptide is NAD kinase (Halobacterium salinarum (strain ATCC 700922 / JCM 11081 / NRC-1) (Halobacterium halobium)).